Here is a 143-residue protein sequence, read N- to C-terminus: Large ribosomal subunit protein uL11 (143 aa).

It belongs to the universal ribosomal protein uL11 family. Part of the ribosomal stalk of the 50S ribosomal subunit. Interacts with L10 and the large rRNA to form the base of the stalk. L10 forms an elongated spine to which L12 dimers bind in a sequential fashion forming a multimeric L10(L12)X complex. In terms of processing, one or more lysine residues are methylated.

In terms of biological role, forms part of the ribosomal stalk which helps the ribosome interact with GTP-bound translation factors. This chain is Large ribosomal subunit protein uL11, found in Stutzerimonas stutzeri (strain A1501) (Pseudomonas stutzeri).